The chain runs to 51 residues: Large ribosomal subunit protein bL33 (51 aa).

Belongs to the bacterial ribosomal protein bL33 family.

This Pseudoalteromonas translucida (strain TAC 125) protein is Large ribosomal subunit protein bL33.